We begin with the raw amino-acid sequence, 417 residues long: uncharacterized protein (417 aa).

Disordered stretches follow at residues phenylalanine 44–arginine 83 and valine 325–glutamate 346. Residues serine 54–serine 64 are compositionally biased toward low complexity. A compositionally biased stretch (polar residues) spans alanine 65 to asparagine 76. The segment covering glutamine 326–arginine 339 has biased composition (basic residues). The chain crosses the membrane as a helical span at residues phenylalanine 362–valine 382.

The protein localises to the membrane. This is an uncharacterized protein from Caenorhabditis elegans.